A 273-amino-acid chain; its full sequence is MSQGYLQFPNIDPVLVSIGPVSIRWYGLMYLVGFMFALWLANRRADKPGSGWTREQVSDLLFAGFLGVVIGGRVGYVIFYNFELFLDDPLYLFKVWTGGMSFHGGLLGVITAMFWYAHKNGRTFFGVADFVAPLVPFGLGMGRMGNFMNSELWGRVTDVPWAIVFPNGGPLPRHPSQLYEMLLEGVVLFFILNWFIKKPRPLGSVSGLFLAGYGTFRFLVEFVREPDAQLGLFGGYISMGQILSMPMIVLGILMMVWAYKRGLYQDKAQVKTK.

Helical transmembrane passes span Val21–Ala41, Leu60–Tyr80, Val95–Trp115, Phe124–Met144, Ser176–Ile196, Gly203–Val223, and Ile237–Trp257. Position 143 (Arg143) interacts with a 1,2-diacyl-sn-glycero-3-phospho-(1'-sn-glycerol).

This sequence belongs to the Lgt family.

It is found in the cell inner membrane. It catalyses the reaction L-cysteinyl-[prolipoprotein] + a 1,2-diacyl-sn-glycero-3-phospho-(1'-sn-glycerol) = an S-1,2-diacyl-sn-glyceryl-L-cysteinyl-[prolipoprotein] + sn-glycerol 1-phosphate + H(+). Its pathway is protein modification; lipoprotein biosynthesis (diacylglyceryl transfer). Catalyzes the transfer of the diacylglyceryl group from phosphatidylglycerol to the sulfhydryl group of the N-terminal cysteine of a prolipoprotein, the first step in the formation of mature lipoproteins. The polypeptide is Phosphatidylglycerol--prolipoprotein diacylglyceryl transferase (Vibrio parahaemolyticus serotype O3:K6 (strain RIMD 2210633)).